The following is a 225-amino-acid chain: UPF0758 protein Sama_0327 (225 aa).

The MPN domain maps to 102–224 (VLTSPDLTRD…IVSFAERGWI (123 aa)). Positions 173, 175, and 186 each coordinate Zn(2+). Residues 173-186 (HNHPSGVAEPSQAD) carry the JAMM motif motif.

It belongs to the UPF0758 family.

This chain is UPF0758 protein Sama_0327, found in Shewanella amazonensis (strain ATCC BAA-1098 / SB2B).